The chain runs to 264 residues: 14-3-3-like protein GF14-A (264 aa).

The interval 245–264 is disordered; that stretch reads DMQDDGGDEMRDATKPEDEH. The span at 252–264 shows a compositional bias: basic and acidic residues; that stretch reads DEMRDATKPEDEH.

This sequence belongs to the 14-3-3 family.

In terms of biological role, is associated with a DNA binding complex that binds to the G box, a well-characterized cis-acting DNA regulatory element found in plant genes. The sequence is that of 14-3-3-like protein GF14-A (GF14A) from Oryza sativa subsp. japonica (Rice).